A 218-amino-acid polypeptide reads, in one-letter code: Adenylate kinase (218 aa).

Position 10 to 15 (glycine 10 to threonine 15) interacts with ATP. Residues serine 30 to valine 59 form an NMP region. Residues threonine 31, arginine 36, glutamine 57 to valine 59, glycine 85 to arginine 88, and glutamine 92 contribute to the AMP site. The segment at glycine 122–aspartate 159 is LID. ATP-binding positions include arginine 123 and serine 132 to tyrosine 133. AMP is bound by residues arginine 156 and arginine 167. Glycine 203 lines the ATP pocket.

This sequence belongs to the adenylate kinase family. In terms of assembly, monomer.

The protein resides in the cytoplasm. It catalyses the reaction AMP + ATP = 2 ADP. It participates in purine metabolism; AMP biosynthesis via salvage pathway; AMP from ADP: step 1/1. Catalyzes the reversible transfer of the terminal phosphate group between ATP and AMP. Plays an important role in cellular energy homeostasis and in adenine nucleotide metabolism. This Chlorobium chlorochromatii (strain CaD3) protein is Adenylate kinase.